The primary structure comprises 368 residues: Putative potassium channel KAT5 (368 aa).

Transmembrane regions (helical) follow at residues 33 to 53 (WWHM…PFEL), 97 to 117 (LLNL…ARVE), and 132 to 152 (LLCV…WMVF). The pore-forming intramembrane region spans 180 to 199 (CAVYWSITTLATVGYGDLHA). The helical transmembrane segment at 206–226 (LFSIAFMLFNMGLTSYIIGNI) threads the bilayer. Position 225–344 (225–344 (NITNLVVRET…CIVFSNFILV (120 aa))) interacts with a nucleoside 3',5'-cyclic phosphate.

This sequence belongs to the potassium channel family. Plant (TC 1.A.1.4) subfamily.

It localises to the membrane. Its function is as follows. Putative inward-rectifying potassium channel. In Oryza sativa subsp. japonica (Rice), this protein is Putative potassium channel KAT5.